The sequence spans 615 residues: Protein translocase subunit SecD (615 aa).

6 helical membrane-spanning segments follow: residues 10 to 30, 452 to 472, 477 to 497, 504 to 524, 546 to 568, and 585 to 605; these read YIMLVVVIIVGLLYALPNLYG, QGLEACLAGLVVSILFMIFFY, LIATSALVANLVLIVGIMSLL, MPGIAGIVLTLAVAVDANVLI, YAGAFSSIFDANITTLIKVIILY, and GVATSMFTAIIGTRAIVNLLY.

Belongs to the SecD/SecF family. SecD subfamily. Forms a complex with SecF. Part of the essential Sec protein translocation apparatus which comprises SecA, SecYEG and auxiliary proteins SecDF-YajC and YidC.

It localises to the cell inner membrane. In terms of biological role, part of the Sec protein translocase complex. Interacts with the SecYEG preprotein conducting channel. SecDF uses the proton motive force (PMF) to complete protein translocation after the ATP-dependent function of SecA. The sequence is that of Protein translocase subunit SecD from Salmonella choleraesuis (strain SC-B67).